Reading from the N-terminus, the 104-residue chain is Type VII secretion system extracellular protein B (104 aa).

The protein belongs to the WXG100 family. In terms of assembly, homodimer. When mixed with EsxA does not form heterodimers. Forms heterodimers with EsxD.

The protein localises to the secreted. Functionally, virulence factor that is important for the establishment of infection in the host. EsxB is required for EsxA synthesis as well as secretion. Mediates together with EsxA the release of S.aureus from the host cell. Also inhibits host cytokine production and thus modulates dendritic cell-mediated immunity. In Staphylococcus aureus (strain USA300), this protein is Type VII secretion system extracellular protein B.